A 1481-amino-acid polypeptide reads, in one-letter code: Cystic fibrosis transmembrane conductance regulator (1481 aa).

Topologically, residues Met-1–Phe-77 are cytoplasmic. A helical transmembrane segment spans residues Phe-78–Gln-98. Residues Phe-81–Leu-365 form the ABC transmembrane type-1 1 domain. At Pro-99–Tyr-122 the chain is on the extracellular side. The chain crosses the membrane as a helical span at residues Leu-123 to His-146. Over His-147–Leu-195 the chain is Cytoplasmic. The helical transmembrane segment at Ala-196–Trp-216 threads the bilayer. Residues Glu-217–Ser-222 lie on the Extracellular side of the membrane. A helical transmembrane segment spans residues Ala-223–Met-243. At Met-244 to Lys-298 the chain is on the cytoplasmic side. Residues Ala-299–Phe-319 form a helical membrane-spanning segment. Residues Leu-320 to Thr-339 lie on the Extracellular side of the membrane. The helical transmembrane segment at Ile-340–Val-358 threads the bilayer. The Cytoplasmic segment spans residues Gln-359 to Ser-858. ATP-binding positions include Trp-401, Gly-458–Thr-465, and Gln-493. Residues Asn-423–Gly-646 form the ABC transporter 1 domain. Residue Cys-524 is the site of S-palmitoyl cysteine attachment. Residues Ser-549 and Ser-660 each carry the phosphoserine modification. Positions Ser-654–Glu-831 are disordered R region. Ser-670 bears the Phosphoserine; by PKA mark. Position 686 is a phosphoserine (Ser-686). A Glycyl lysine isopeptide (Lys-Gly) (interchain with G-Cter in ubiquitin) cross-link involves residue Lys-688. Phosphoserine occurs at positions 700 and 712. At Thr-717 the chain carries Phosphothreonine. Phosphoserine occurs at positions 737, 768, 790, 795, and 813. Residues Leu-859–Val-879 traverse the membrane as a helical segment. One can recognise an ABC transmembrane type-1 2 domain in the interval Leu-859–Ser-1155. Residues Leu-880–Ile-918 are Extracellular-facing. N-linked (GlcNAc...) asparagine glycans are attached at residues Asn-894 and Asn-900. The discontinuously helical transmembrane segment at Tyr-919–His-939 threads the bilayer. Residues Thr-940–Thr-990 are Cytoplasmic-facing. Residues Ile-991–Leu-1011 traverse the membrane as a helical segment. At Gln-1012–Pro-1013 the chain is on the extracellular side. Residues Tyr-1014–Leu-1034 traverse the membrane as a helical segment. Over His-1035–Thr-1095 the chain is Cytoplasmic. Residues Leu-1096 to Phe-1116 form a helical membrane-spanning segment. Topologically, residues Ile-1117–Gly-1130 are extracellular. Residues Ile-1131–Ile-1151 form a helical membrane-spanning segment. The Cytoplasmic portion of the chain corresponds to Asp-1152–Leu-1481. The ABC transporter 2 domain occupies Met-1211–Pro-1444. ATP contacts are provided by residues Tyr-1220 and Gly-1245–Ser-1252. The tract at residues Arg-1387 to Leu-1481 is interaction with GORASP2. The S-palmitoyl cysteine moiety is linked to residue Cys-1396. 2 positions are modified to phosphoserine: Ser-1445 and Ser-1457. The disordered stretch occupies residues Lys-1449–Leu-1481. Residues Leu-1450–Arg-1462 are compositionally biased toward basic residues. Residues Glu-1471–Leu-1481 are compositionally biased toward acidic residues. The PDZ-binding signature appears at Thr-1479–Leu-1481.

Belongs to the ABC transporter superfamily. ABCC family. CFTR transporter (TC 3.A.1.202) subfamily. Monomer; does not require oligomerization for channel activity. May form oligomers in the membrane. Interacts with SLC26A3, SLC26A6 and NHERF1. Interacts with SHANK2. Interacts with MYO6. Interacts (via C-terminus) with GOPC (via PDZ domain); this promotes CFTR internalization and thereby decreases channel activity. Interacts with SLC4A7 through NHERF1. Found in a complex with MYO5B and RAB11A. Interacts with ANO1. Interacts with SLC26A8. Interacts with AHCYL1; the interaction increases CFTR activity. Interacts with CSE1L. The core-glycosylated form interacts with GORASP2 (via PDZ GRASP-type 1 domain) in respone to ER stress. Interacts with MARCHF2; the interaction leads to CFTR ubiqtuitination and degradation. Interacts with ADGRG2. In terms of processing, N-glycosylated. Phosphorylated; cAMP treatment promotes phosphorylation and activates the channel. Dephosphorylation decreases the ATPase activity (in vitro). Phosphorylation at PKA sites activates the channel. Phosphorylation at PKC sites enhances the response to phosphorylation by PKA. Phosphorylated by AMPK; this inhibits channel activity. Post-translationally, ubiquitinated, leading to its degradation in the lysosome. Deubiquitination by USP10 in early endosomes enhances its endocytic recycling to the cell membrane. Ubiquitinated by RNF185 during ER stress. Ubiquitinated by MARCHF2.

It localises to the apical cell membrane. The protein resides in the early endosome membrane. It is found in the cell membrane. Its subcellular location is the recycling endosome membrane. The protein localises to the endoplasmic reticulum membrane. It localises to the nucleus. The catalysed reaction is ATP + H2O + closed Cl(-) channel = ADP + phosphate + open Cl(-) channel.. The enzyme catalyses chloride(in) = chloride(out). It carries out the reaction hydrogencarbonate(in) = hydrogencarbonate(out). It catalyses the reaction ATP + H2O = ADP + phosphate + H(+). Epithelial ion channel that plays an important role in the regulation of epithelial ion and water transport and fluid homeostasis. Mediates the transport of chloride ions across the cell membrane. Possesses an intrinsic ATPase activity and utilizes ATP to gate its channel; the passive flow of anions through the channel is gated by cycles of ATP binding and hydrolysis by the ATP-binding domains. The ion channel is also permeable to HCO(3)(-); selectivity depends on the extracellular chloride concentration. Exerts its function also by modulating the activity of other ion channels and transporters. Contributes to the regulation of the pH and the ion content of the epithelial fluid layer. Modulates the activity of the epithelial sodium channel (ENaC) complex, in part by regulating the cell surface expression of the ENaC complex. May regulate bicarbonate secretion and salvage in epithelial cells by regulating the transporter SLC4A7. Can inhibit the chloride channel activity of ANO1. Plays a role in the chloride and bicarbonate homeostasis during sperm epididymal maturation and capacitation. The chain is Cystic fibrosis transmembrane conductance regulator from Microcebus murinus (Gray mouse lemur).